A 280-amino-acid polypeptide reads, in one-letter code: Protein YibA (280 aa).

The polypeptide is Protein YibA (yibA) (Escherichia coli O157:H7).